The chain runs to 208 residues: MEAPPVTVMPVTGGTINMMEYLLQGSVLDQSLESLLHRLRGLCDNMEPESFADHELVYLLKGQQGNPFILRARRSLLDPSVPWHLRYLGQPEVGDKSRHALVRNCVDVAASHSLPDFLNEMGFRMDHEFVAKGQVFRKGVMKVVVSKLSRVLVPGNTDNTEPLSLSYLVELSVLAPAGQDTVSEDMRSFAEQLKPLVHLEKIDPKRLM.

Belongs to the Mediator complex subunit 18 family. Component of the Mediator complex.

It localises to the nucleus. Its function is as follows. Component of the Mediator complex, a coactivator involved in the regulated transcription of nearly all RNA polymerase II-dependent genes. Mediator functions as a bridge to convey information from gene-specific regulatory proteins to the basal RNA polymerase II transcription machinery. Mediator is recruited to promoters by direct interactions with regulatory proteins and serves as a scaffold for the assembly of a functional preinitiation complex with RNA polymerase II and the general transcription factors. This chain is Mediator of RNA polymerase II transcription subunit 18 (med18), found in Danio rerio (Zebrafish).